The chain runs to 253 residues: MKILVAVKRVVDYAVKVRVRPDRTGVETASVKMSMNPFCEIAVEEALRLREAGAATEVVAATVGPSQSADTLRTALAMGADRAVHVLHDPDPSRPLLPLAVAKILRALALQENPGLVILGKQAIDDDCNQTGQMLAGLLNWPQGTFASKVILNKEKATVEREVDGGIETISLDLPAVITTDLRLNQPRYATLPNIMKAKSKVIKKVTPEDLDVDIRSDMEVVEVTEPPKRKAGVILSSVDELIDRLKNEARVL.

It belongs to the ETF beta-subunit/FixA family. As to quaternary structure, heterodimer of an alpha and a beta subunit. The cofactor is FAD. Requires AMP as cofactor.

The protein resides in the mitochondrion matrix. In terms of biological role, the electron transfer flavoprotein serves as a specific electron acceptor for several dehydrogenases, including five acyl-CoA dehydrogenases, glutaryl-CoA and sarcosine dehydrogenase. It transfers the electrons to the main mitochondrial respiratory chain via ETF-ubiquinone oxidoreductase (ETF dehydrogenase). The sequence is that of Electron transfer flavoprotein subunit beta, mitochondrial (ETFB) from Oryza sativa subsp. indica (Rice).